We begin with the raw amino-acid sequence, 228 residues long: MKFAVIVFPGSNCDRDMYHAVKEVAGAEAELVWYTETDKLEGVDGILLPGGFSYGDYLRSGSMASTSDVMHKIREHAAKGKPVLGVCNGFQILTESGLLPGALMRNKHLSFMCHQEELVVEDNQTFFTSLYEKKEVVRFPIAHGEGSYFCDEATLKELQANNQIVFTYKNNPNGSIENIAGIRNKQGNVLGMMPHPERAVEELLGSDDGLKLFKSMIANWRDSYAINA.

A Glutamine amidotransferase type-1 domain is found at 3–226 (FAVIVFPGSN…IANWRDSYAI (224 aa)). The active-site Nucleophile is the Cys87. Catalysis depends on residues His195 and Glu197.

As to quaternary structure, part of the FGAM synthase complex composed of 1 PurL, 1 PurQ and 2 PurS subunits.

The protein resides in the cytoplasm. It carries out the reaction N(2)-formyl-N(1)-(5-phospho-beta-D-ribosyl)glycinamide + L-glutamine + ATP + H2O = 2-formamido-N(1)-(5-O-phospho-beta-D-ribosyl)acetamidine + L-glutamate + ADP + phosphate + H(+). The enzyme catalyses L-glutamine + H2O = L-glutamate + NH4(+). The protein operates within purine metabolism; IMP biosynthesis via de novo pathway; 5-amino-1-(5-phospho-D-ribosyl)imidazole from N(2)-formyl-N(1)-(5-phospho-D-ribosyl)glycinamide: step 1/2. In terms of biological role, part of the phosphoribosylformylglycinamidine synthase complex involved in the purines biosynthetic pathway. Catalyzes the ATP-dependent conversion of formylglycinamide ribonucleotide (FGAR) and glutamine to yield formylglycinamidine ribonucleotide (FGAM) and glutamate. The FGAM synthase complex is composed of three subunits. PurQ produces an ammonia molecule by converting glutamine to glutamate. PurL transfers the ammonia molecule to FGAR to form FGAM in an ATP-dependent manner. PurS interacts with PurQ and PurL and is thought to assist in the transfer of the ammonia molecule from PurQ to PurL. This is Phosphoribosylformylglycinamidine synthase subunit PurQ from Oceanobacillus iheyensis (strain DSM 14371 / CIP 107618 / JCM 11309 / KCTC 3954 / HTE831).